Consider the following 483-residue polypeptide: GDP-fucose protein O-fucosyltransferase 3 (483 aa).

The Cytoplasmic segment spans residues 1 to 8; the sequence is MVRIPRRK. A helical; Signal-anchor for type II membrane protein transmembrane segment spans residues 9–31; it reads LLPSCLCMTATVFLMVTVQVLVE. The Lumenal segment spans residues 32–483; it reads LGKFERKKFK…FWALVFKDSF (452 aa). The tract at residues 45–64 is disordered; that stretch reads LQDGQKDVEGDPKHLNPLPK. N110, N168, and N318 each carry an N-linked (GlcNAc...) asparagine glycan. Residues C389 and C392 are joined by a disulfide bond. N-linked (GlcNAc...) asparagine glycosylation is present at N468.

The protein belongs to the glycosyltransferase 10 family.

It localises to the endoplasmic reticulum membrane. The enzyme catalyses L-threonyl-[protein] + GDP-beta-L-fucose = 3-O-(alpha-L-fucosyl)-L-threonyl-[protein] + GDP + H(+). It carries out the reaction L-seryl-[protein] + GDP-beta-L-fucose = 3-O-(alpha-L-fucosyl)-L-seryl-[protein] + GDP + H(+). The protein operates within protein modification; protein glycosylation. Functionally, protein O-fucosyltransferase that specifically catalyzes O-fucosylation of serine or threonine residues in EMI domains of target proteins, such as MMRN1, MMRN2 and EMID1. Attaches fucose through an O-glycosidic linkage. O-fucosylation of EMI domain-containing proteins may be required for facilitating protein folding and secretion. May also show alpha-(1,3)-fucosyltransferase activity toward the innermost N-acetyl glucosamine (GlcNAc) residue in biantennary N-glycan acceptors. However, this was tested with a library of synthetic substrates and this activity is unsure in vivo. May be involved in biosynthesis of Lewis X-carrying biantennary N-glycans that regulate neuron stem cell self-renewal during brain development. The sequence is that of GDP-fucose protein O-fucosyltransferase 3 (Fut10) from Rattus norvegicus (Rat).